We begin with the raw amino-acid sequence, 156 residues long: 6,7-dimethyl-8-ribityllumazine synthase (156 aa).

5-amino-6-(D-ribitylamino)uracil is bound by residues Phe-23, 57-59 (AYE), and 81-83 (AII). Residue 86–87 (GT) participates in (2S)-2-hydroxy-3-oxobutyl phosphate binding. The Proton donor role is filled by His-89. Phe-114 contacts 5-amino-6-(D-ribitylamino)uracil. Arg-128 contributes to the (2S)-2-hydroxy-3-oxobutyl phosphate binding site.

Belongs to the DMRL synthase family.

It catalyses the reaction (2S)-2-hydroxy-3-oxobutyl phosphate + 5-amino-6-(D-ribitylamino)uracil = 6,7-dimethyl-8-(1-D-ribityl)lumazine + phosphate + 2 H2O + H(+). The protein operates within cofactor biosynthesis; riboflavin biosynthesis; riboflavin from 2-hydroxy-3-oxobutyl phosphate and 5-amino-6-(D-ribitylamino)uracil: step 1/2. Its function is as follows. Catalyzes the formation of 6,7-dimethyl-8-ribityllumazine by condensation of 5-amino-6-(D-ribitylamino)uracil with 3,4-dihydroxy-2-butanone 4-phosphate. This is the penultimate step in the biosynthesis of riboflavin. This is 6,7-dimethyl-8-ribityllumazine synthase from Helicobacter pylori (strain J99 / ATCC 700824) (Campylobacter pylori J99).